Here is an 89-residue protein sequence, read N- to C-terminus: Small ribosomal subunit protein uS15 (89 aa).

Belongs to the universal ribosomal protein uS15 family. Part of the 30S ribosomal subunit. Forms a bridge to the 50S subunit in the 70S ribosome, contacting the 23S rRNA.

One of the primary rRNA binding proteins, it binds directly to 16S rRNA where it helps nucleate assembly of the platform of the 30S subunit by binding and bridging several RNA helices of the 16S rRNA. Functionally, forms an intersubunit bridge (bridge B4) with the 23S rRNA of the 50S subunit in the ribosome. The protein is Small ribosomal subunit protein uS15 of Treponema denticola (strain ATCC 35405 / DSM 14222 / CIP 103919 / JCM 8153 / KCTC 15104).